Here is a 436-residue protein sequence, read N- to C-terminus: Protein arginine methyltransferase NDUFAF7, mitochondrial (436 aa).

Residues 1 to 41 (MNALVRRCVARTGIPSIWRRKCFSSGNEPAESNHVTPMLRH) constitute a mitochondrion transit peptide. Positions 413 to 436 (QGGKACQSEAPSTSVPGFDELVWH) are disordered.

It belongs to the NDUFAF7 family. As to quaternary structure, interacts with NDUFS2.

It localises to the mitochondrion. The catalysed reaction is L-arginyl-[protein] + 2 S-adenosyl-L-methionine = N(omega),N(omega)'-dimethyl-L-arginyl-[protein] + 2 S-adenosyl-L-homocysteine + 2 H(+). Arginine methyltransferase involved in the assembly or stability of mitochondrial NADH:ubiquinone oxidoreductase complex (complex I). Acts by mediating symmetric dimethylation of 'Arg-118' of NDUFS2 after it assembles into the complex I, stabilizing the early intermediate complex. The sequence is that of Protein arginine methyltransferase NDUFAF7, mitochondrial from Rattus norvegicus (Rat).